The primary structure comprises 462 residues: Trigger factor (462 aa).

Residues Gly163–Leu248 form the PPIase FKBP-type domain. The tract at residues Ser442–Lys462 is disordered. The span at Ala452 to Lys462 shows a compositional bias: basic and acidic residues.

Belongs to the FKBP-type PPIase family. Tig subfamily.

The protein localises to the cytoplasm. The enzyme catalyses [protein]-peptidylproline (omega=180) = [protein]-peptidylproline (omega=0). Functionally, involved in protein export. Acts as a chaperone by maintaining the newly synthesized protein in an open conformation. Functions as a peptidyl-prolyl cis-trans isomerase. This is Trigger factor from Mycoplasmopsis synoviae (strain 53) (Mycoplasma synoviae).